Consider the following 409-residue polypeptide: Triose phosphate/phosphate translocator, chloroplastic (409 aa).

Residues 1–85 (MSALGTLSGG…ARRHTLQPPA (85 aa)) constitute a chloroplast transit peptide. The Chloroplast intermembrane segment spans residues 86-104 (AAAESAGEAKSVGFLEKYP). Residues 105–125 (ALVTGFFFFMWYFLNVIFNIL) traverse the membrane as a helical segment. At 126 to 137 (NKKIYNYFPYPY) the chain is on the lumenal side. The helical transmembrane segment at 138 to 158 (FVSLIHLVVGVVYCLISWSVG) threads the bilayer. The Chloroplast intermembrane portion of the chain corresponds to 159-215 (LPKRAPINGTLLKLLFPVALCHGIGHITSNVSFAAVAVSFAHTIKALEPFFSAAATQ). The chain crosses the membrane as a helical span at residues 216–236 (FILGQQVPFSLWLSLAPVVIG). Residues 237–280 (VSMASLTELSFNWTGFINAMISNISFTYRSIYSKKAMTDMDSTN) lie on the Lumenal side of the membrane. A helical membrane pass occupies residues 281–300 (VYAYISIIALIVCIPPALIF). Residues 301-378 (EGPKLMQHGF…IVFGNKISTQ (78 aa)) lie on the Chloroplast intermembrane side of the membrane. A helical transmembrane segment spans residues 379–399 (TGIGTSIAIAGVAMYSYIKAK). Residues 400-409 (IEEEKRKKSA) lie on the Lumenal side of the membrane.

The protein belongs to the TPT transporter family. TPT (TC 2.A.7.9) subfamily. Homodimer.

It is found in the plastid. The protein localises to the chloroplast membrane. Functionally, mediates the export of fixed carbons from the chloroplasts into the cytosol in the form of triose phosphates. In addition, it can also bind and transport phosphoenolpyruvate, thereby increasing the photosynthetic efficiency of C4-plants. This chain is Triose phosphate/phosphate translocator, chloroplastic (TPT), found in Zea mays (Maize).